The sequence spans 160 residues: Cell division protein SepF (160 aa).

A compositionally biased stretch (acidic residues) spans 18-30; that stretch reads AEGEDDFEDDVDT. The disordered stretch occupies residues 18–72; sequence AEGEDDFEDDVDTGETSFDSDHSVTPMPSSSASASTPSAPREQSNPFQGGRVSRI. The span at 45–57 shows a compositional bias: low complexity; it reads PSSSASASTPSAP.

Belongs to the SepF family. In terms of assembly, homodimer. Interacts with FtsZ.

It is found in the cytoplasm. Cell division protein that is part of the divisome complex and is recruited early to the Z-ring. Probably stimulates Z-ring formation, perhaps through the cross-linking of FtsZ protofilaments. Its function overlaps with FtsA. The chain is Cell division protein SepF from Bifidobacterium adolescentis (strain ATCC 15703 / DSM 20083 / NCTC 11814 / E194a).